We begin with the raw amino-acid sequence, 314 residues long: Inactive protein FRIGIDA (314 aa).

Residues methionine 1–proline 18 are compositionally biased toward low complexity. Positions methionine 1–glutamate 31 are disordered. Residues valine 67 to asparagine 97 adopt a coiled-coil conformation.

This sequence belongs to the Frigida family.

It localises to the nucleus. The chain is Inactive protein FRIGIDA (FRI) from Arabidopsis thaliana (Mouse-ear cress).